Here is a 163-residue protein sequence, read N- to C-terminus: MKTYRRQIREKILQALYTLELRETDIESAAGWLLTPEILEDPNAMKFFNLLLKSIKDNREEIDRYIAAHTFNWDMSRIAIIDKNILRMALAELLYCEDIPPKVSINEAIEIAKKFNSTDKSSKFVNGILDAIFNELKTEGKIKKNGRGLINHSPAKVQKTEPE.

It belongs to the NusB family.

In terms of biological role, involved in transcription antitermination. Required for transcription of ribosomal RNA (rRNA) genes. Binds specifically to the boxA antiterminator sequence of the ribosomal RNA (rrn) operons. The sequence is that of Transcription antitermination protein NusB from Chlorobium luteolum (strain DSM 273 / BCRC 81028 / 2530) (Pelodictyon luteolum).